The primary structure comprises 938 residues: MERYLPVSKKRNSSSSLEKITGSANGNGTLYSEEDTNLEENDFSWGDYLEETGTRAVPHVSFRHVEISIRSNFQPGMKLEVANKNNPDTYWVATIITTCGQLLLLRYCGYGEDRRADFWCDVIIADLHPVGWCTQNNKVLRPPDAIKDKYSDWTDFLIRELTGSRTAPANLLEGPLRGKGPIDLITVDSLIELQDSQNPFQYWIVSVTENVGGRLRLRYVGLEHTESYDRWLFYLDYRLRPIGWCQENKYRMDPPSDLYYLKLPFEWKCALEKALVLAAESPLPMEVFKDHADLQSHFFTVGMRLETLHISDPFHIYPASVTKVFNSKFFQVAIDDLRPEADKPTMLCHADSLGILPVQWCLKNGVNLAPPKGYSGQDFNWVDYHKQRQAEEAPHFCFKNAFSRGFSKNMKLEAVNPVNPGEVCVATVVSVKGRLLWLHLEGLETPMPDIIVDMDSMDIFPVGWCEANSYPLTTPYKASSKSKRKTVHFKMEKQLLSPVPIEKIPHELCLLPPQMDSPVGAINAKYCCPQLFVNHRCFSGPFLNKGRISELPQSVGPGMCVLVLKEILTLITNAAYKPGRVLRELQLVEDPEWNSQEEILKAKYGGKTYRAVVKIVRTADQVMNFCRQVCAKLECCPNLLSPVLISETCPENCSVHTKTRYTYYYGKRRRVIQSSLRVSNIETPPKSTRRRKRRKSVYVQKRRKSAIVVPAGVPAGVPAGVPEDIPAGIPEGIPASIPESIPEGIPESLPEAIPESIPKGSAQKTEQEKRETLDTARKKTGYHGPAYQTDTSAAQVPFARPRRAVTLRRNSEALKRPPVERARRVRTVPTTASSNNRVKGPLVRIVKPEDSSQSDEEKLILESNPLEWSVTDVVRFIKLTDCAPLARIFQEQDIDGQALLLLTLPTVQECMELKLGPAIKLCHQIERVKVAFYAQYAS.

The disordered stretch occupies residues 1 to 32; the sequence is MERYLPVSKKRNSSSSLEKITGSANGNGTLYS. Positions 13 to 30 are enriched in polar residues; that stretch reads SSSSLEKITGSANGNGTL. 4 MBT repeats span residues 43-143, 151-255, 265-371, and 379-475; these read FSWG…LRPP, SDWT…MDPP, FEWK…LAPP, and FNWV…LTTP. The tract at residues 742 to 836 is disordered; the sequence is PEGIPESLPE…TVPTTASSNN (95 aa). 2 stretches are compositionally biased toward basic and acidic residues: residues 765–777 and 809–822; these read TEQE…DTAR and RNSE…VERA. Residues 868-931 enclose the SAM domain; it reads WSVTDVVRFI…CHQIERVKVA (64 aa).

As to quaternary structure, interacts with YY1. Interacts with methylated histones H3K9me2 and H4K20me2. As to expression, expressed in testis and, at much lower levels, in ovary.

It localises to the nucleus. In terms of biological role, transcriptional repressor of HOXB13 gene. The chain is Scm-like with four MBT domains protein 2 (Sfmbt2) from Mus musculus (Mouse).